We begin with the raw amino-acid sequence, 275 residues long: Chlorophyll a-b binding protein 3, chloroplastic (275 aa).

Trp58 contacts chlorophyll b. Residues Phe78, Ser84, and Glu102 each coordinate chlorophyll a. Chlorophyll b is bound by residues Arg107, Ile142, Glu169, and Arg172. Chlorophyll a contacts are provided by Lys226, Glu227, Asn230, Arg232, Gln244, and His259. Residues 233-253 form a helical membrane-spanning segment; it reads LAMLAILGYFIQGLVTGVGPY.

The protein belongs to the light-harvesting chlorophyll a/b-binding (LHC) protein family. As to quaternary structure, the LHC complex consists of chlorophyll a-b binding proteins. It depends on Binds at least 14 chlorophylls (8 Chl-a and 6 Chl-b) and carotenoids such as lutein and neoxanthin. as a cofactor. In terms of processing, photoregulated by reversible phosphorylation of its threonine residues.

Its subcellular location is the plastid. It is found in the chloroplast thylakoid membrane. Its function is as follows. The light-harvesting complex (LHC) functions as a light receptor, it captures and delivers excitation energy to photosystems with which it is closely associated. Functionally, may channel protons produced in the catalytic Mn center of water oxidation into the thylakoid lumen. The polypeptide is Chlorophyll a-b binding protein 3, chloroplastic (Pisum sativum (Garden pea)).